A 477-amino-acid polypeptide reads, in one-letter code: Small ribosomal subunit protein uS5m (477 aa).

The protein belongs to the universal ribosomal protein uS5 family. As to quaternary structure, component of the mitochondrial small ribosomal subunit (mt-SSU). Mature N.crassa 74S mitochondrial ribosomes consist of a small (37S) and a large (54S) subunit. The 37S small subunit contains a 16S ribosomal RNA (16S mt-rRNA) and 32 different proteins. The 54S large subunit contains a 23S rRNA (23S mt-rRNA) and 42 different proteins. uS3m, uS4m and uS5m form the narrow entry site of the mRNA channel.

Its subcellular location is the mitochondrion. Component of the mitochondrial ribosome (mitoribosome), a dedicated translation machinery responsible for the synthesis of mitochondrial genome-encoded proteins, including at least some of the essential transmembrane subunits of the mitochondrial respiratory chain. The mitoribosomes are attached to the mitochondrial inner membrane and translation products are cotranslationally integrated into the membrane. In Neurospora crassa (strain ATCC 24698 / 74-OR23-1A / CBS 708.71 / DSM 1257 / FGSC 987), this protein is Small ribosomal subunit protein uS5m (mrps5).